A 568-amino-acid chain; its full sequence is Arginine--tRNA ligase (568 aa).

Residues 129-139 (ANPTGPLHIGH) carry the 'HIGH' region motif.

This sequence belongs to the class-I aminoacyl-tRNA synthetase family. In terms of assembly, monomer.

It is found in the cytoplasm. It catalyses the reaction tRNA(Arg) + L-arginine + ATP = L-arginyl-tRNA(Arg) + AMP + diphosphate. This Wolbachia pipientis wMel protein is Arginine--tRNA ligase.